We begin with the raw amino-acid sequence, 101 residues long: Chaperone modulatory protein CbpM (101 aa).

Belongs to the CbpM family.

Its function is as follows. Interacts with CbpA and inhibits both the DnaJ-like co-chaperone activity and the DNA binding activity of CbpA. Together with CbpA, modulates the activity of the DnaK chaperone system. Does not inhibit the co-chaperone activity of DnaJ. This is Chaperone modulatory protein CbpM from Pseudomonas putida (strain W619).